Consider the following 441-residue polypeptide: 3'-N-debenzoyl-2'-deoxytaxol N-benzoyltransferase (441 aa).

Catalysis depends on proton acceptor residues histidine 163 and aspartate 373.

This sequence belongs to the plant acyltransferase family.

It carries out the reaction 3'-N-debenzoyltaxol + benzoyl-CoA = paclitaxel + CoA + H(+). The protein operates within alkaloid biosynthesis; taxol biosynthesis. Catalyzes the stereoselective coupling of the surrogate substrate N-debenzoyl-(3'RS)-2'-deoxytaxol with benzoyl-CoA to form predominantly one 3'-epimer of 2'-deoxytaxol. This enzymatic reaction constitutes the final acylation in the taxol biosynthetic pathway. In Taxus canadensis (Canadian yew), this protein is 3'-N-debenzoyl-2'-deoxytaxol N-benzoyltransferase.